A 250-amino-acid chain; its full sequence is 1-(5-phosphoribosyl)-5-[(5-phosphoribosylamino)methylideneamino] imidazole-4-carboxamide isomerase (250 aa).

D8 serves as the catalytic Proton acceptor. The active-site Proton donor is the D129.

The protein belongs to the HisA/HisF family.

It localises to the cytoplasm. The catalysed reaction is 1-(5-phospho-beta-D-ribosyl)-5-[(5-phospho-beta-D-ribosylamino)methylideneamino]imidazole-4-carboxamide = 5-[(5-phospho-1-deoxy-D-ribulos-1-ylimino)methylamino]-1-(5-phospho-beta-D-ribosyl)imidazole-4-carboxamide. It participates in amino-acid biosynthesis; L-histidine biosynthesis; L-histidine from 5-phospho-alpha-D-ribose 1-diphosphate: step 4/9. The protein is 1-(5-phosphoribosyl)-5-[(5-phosphoribosylamino)methylideneamino] imidazole-4-carboxamide isomerase of Desulfatibacillum aliphaticivorans.